The primary structure comprises 95 residues: Putative septation protein SpoVG (95 aa).

Belongs to the SpoVG family.

Could be involved in septation. The protein is Putative septation protein SpoVG of Brevibacillus brevis (strain 47 / JCM 6285 / NBRC 100599).